The following is a 342-amino-acid chain: C-X-C chemokine receptor type 6 (342 aa).

Residues 1-32 (MAEHDYHEDYGFSSFNDSSQEEHQDFLQFSKV) are Extracellular-facing. A glycan (N-linked (GlcNAc...) asparagine) is linked at N16. The chain crosses the membrane as a helical span at residues 33–59 (FLPCMYLVVFVCGLVGNSLVLVISIFY). At 60–68 (HKLQSLTDV) the chain is on the cytoplasmic side. A helical transmembrane segment spans residues 69 to 89 (FLVNLPLADLVFVCTLPFWAY). The Extracellular segment spans residues 90–103 (AGIHEWVFGQVMCK). C102 and C180 are disulfide-bonded. The helical transmembrane segment at 104 to 125 (SLLGIYTINFYTSMLILTCITV) threads the bilayer. The Cytoplasmic segment spans residues 126-143 (DRFIVVVKATKAYNQQAK). Residues 144–164 (RMTWGKVTSLLIWVISLLVSL) form a helical membrane-spanning segment. Topologically, residues 165-187 (PQIIYGNVFNLDKLICGYHDEAI) are extracellular. Residues 188–215 (STVVLATQMTLGFFLPLLTMIVCYSVII) form a helical membrane-spanning segment. Residues 216-231 (KTLLHAGGFQKHRSLK) are Cytoplasmic-facing. A helical transmembrane segment spans residues 232–259 (IIFLVMAVFLLTQMPFNLMKFIRSTHWE). At 260–275 (YYAMTSFHYTIMVTEA) the chain is on the extracellular side. The helical transmembrane segment at 276–293 (IAYLRACLNPVLYAFVSL) threads the bilayer. Over 294–342 (KFRKNFWKLVKDIGCLPYLGVSHQWKSSEDNSKTFSASHNVEATSMFQL) the chain is Cytoplasmic.

This sequence belongs to the G-protein coupled receptor 1 family. As to expression, expressed in lymphoid tissues and activated T cells.

The protein localises to the cell membrane. In terms of biological role, receptor for the C-X-C chemokine CXCL16. Used as a coreceptor by SIVs and by strains of HIV-2 and m-tropic HIV-1. This chain is C-X-C chemokine receptor type 6 (CXCR6), found in Homo sapiens (Human).